Reading from the N-terminus, the 846-residue chain is Arsenate respiratory reductase molybdopterin-containing subunit ArrA (846 aa).

The tat-type signal signal peptide spans Met1–Ala29. The 4Fe-4S Mo/W bis-MGD-type domain occupies Gly43–Asp99. 4 residues coordinate [4Fe-4S] cluster: Cys50, Cys53, Cys57, and Cys85. Position 155 (Arg155) interacts with arsenite. Tyr156 provides a ligand contact to arsenate. An arsenite-binding site is contributed by His179. Arsenate is bound at residue Ser180. Mo-bis(molybdopterin guanine dinucleotide) is bound at residue Cys183. Position 188 (Lys188) interacts with arsenate. Tyr200 provides a ligand contact to arsenite.

Belongs to the prokaryotic molybdopterin-containing oxidoreductase family. In terms of assembly, heterodimer composed of one large subunit (ArrA) and one small subunit (ArrB). It depends on [4Fe-4S] cluster as a cofactor. Mo-bis(molybdopterin guanine dinucleotide) serves as cofactor. Post-translationally, predicted to be exported by the Tat system. The position of the signal peptide cleavage has been experimentally proven.

It localises to the periplasm. The enzyme catalyses arsenite + A + H2O = arsenate + AH2 + H(+). In terms of biological role, component of the arsenate respiratory reductase (Arr) complex, which catalyzes the reduction of arsenate (As(V)) to arsenite (As(III)). Can use acetate as the electron donor. ArrA is the arsenate-binding subunit. In Chrysiogenes arsenatis, this protein is Arsenate respiratory reductase molybdopterin-containing subunit ArrA.